The sequence spans 457 residues: UDP-N-acetylmuramate--L-alanine ligase (457 aa).

112-118 (GTHGKTT) is a binding site for ATP.

This sequence belongs to the MurCDEF family.

It is found in the cytoplasm. The catalysed reaction is UDP-N-acetyl-alpha-D-muramate + L-alanine + ATP = UDP-N-acetyl-alpha-D-muramoyl-L-alanine + ADP + phosphate + H(+). The protein operates within cell wall biogenesis; peptidoglycan biosynthesis. In terms of biological role, cell wall formation. This chain is UDP-N-acetylmuramate--L-alanine ligase, found in Solidesulfovibrio magneticus (strain ATCC 700980 / DSM 13731 / RS-1) (Desulfovibrio magneticus).